The chain runs to 174 residues: Protein GrpE (174 aa).

Belongs to the GrpE family. In terms of assembly, homodimer.

It localises to the cytoplasm. Its function is as follows. Participates actively in the response to hyperosmotic and heat shock by preventing the aggregation of stress-denatured proteins, in association with DnaK and GrpE. It is the nucleotide exchange factor for DnaK and may function as a thermosensor. Unfolded proteins bind initially to DnaJ; upon interaction with the DnaJ-bound protein, DnaK hydrolyzes its bound ATP, resulting in the formation of a stable complex. GrpE releases ADP from DnaK; ATP binding to DnaK triggers the release of the substrate protein, thus completing the reaction cycle. Several rounds of ATP-dependent interactions between DnaJ, DnaK and GrpE are required for fully efficient folding. This chain is Protein GrpE, found in Methanothermobacter thermautotrophicus (strain ATCC 29096 / DSM 1053 / JCM 10044 / NBRC 100330 / Delta H) (Methanobacterium thermoautotrophicum).